Here is a 65-residue protein sequence, read N- to C-terminus: Large ribosomal subunit protein bL35 (65 aa).

Belongs to the bacterial ribosomal protein bL35 family.

This is Large ribosomal subunit protein bL35 from Stenotrophomonas maltophilia (strain R551-3).